A 687-amino-acid polypeptide reads, in one-letter code: RNA-binding protein VTS1 (687 aa).

The span at 1–10 (MASHTLRPHR) shows a compositional bias: basic residues. Disordered regions lie at residues 1 to 115 (MASH…TPEA), 248 to 341 (AAAK…PGIG), and 526 to 598 (SPFN…AGVA). Over residues 29 to 41 (TRQSLGPPTSGNS) the composition is skewed to polar residues. The segment covering 52–68 (GLASPSSPSQPRHVSSS) has biased composition (low complexity). Residues 287–301 (GLESNMSGRSRSKSP) show a composition bias toward polar residues. A compositionally biased stretch (basic and acidic residues) spans 305-324 (PRPKSTDFSGKPRESLRRES). Residues 526-539 (SPFNASAPSLQPGL) show a composition bias toward polar residues. A compositionally biased stretch (low complexity) spans 550 to 566 (QSSHLNQHYNQHQQQHQ). A compositionally biased stretch (gly residues) spans 585 to 597 (QTGGGGAGGGAGV). One can recognise an SAM domain in the interval 606–667 (KVLEDVPNWL…LKVFYNVRTK (62 aa)).

Belongs to the VTS1 family. Monomer. Binds to RNA.

Its subcellular location is the cytoplasm. The protein resides in the cytosol. It is found in the P-body. Functionally, RNA-binding protein involved in post-transcriptional regulation through transcript degradation. This chain is RNA-binding protein VTS1, found in Cryptococcus neoformans var. grubii serotype A (strain H99 / ATCC 208821 / CBS 10515 / FGSC 9487) (Filobasidiella neoformans var. grubii).